The sequence spans 1142 residues: Nucleoporin nup131 (1142 aa).

The protein belongs to the nucleoporin Nup133 family. As to quaternary structure, component of the npc107-120 complex which consists of nup85, nup107, nup120, nup131, nup132 and seh1. Interacts with nup107.

The protein resides in the nucleus. Functions as a component of the nuclear pore complex (NPC). NPC components, collectively referred to as nucleoporins (NUPs), can play the role of both NPC structural components and of docking or interaction partners for transiently associated nuclear transport factors. Active directional transport is assured by both, a Phe-Gly (FG) repeat affinity gradient for these transport factors across the NPC and a transport cofactor concentration gradient across the nuclear envelope. The sequence is that of Nucleoporin nup131 (nup131) from Schizosaccharomyces pombe (strain 972 / ATCC 24843) (Fission yeast).